The chain runs to 157 residues: UPF0756 membrane protein ABC2716 (157 aa).

4 helical membrane-spanning segments follow: residues 8–28 (FLLL…IIAI), 54–74 (LGVT…DIGF), 84–104 (LYAW…ASGI), and 117–137 (LVLG…GPLI).

The protein belongs to the UPF0756 family.

It localises to the cell membrane. The chain is UPF0756 membrane protein ABC2716 from Shouchella clausii (strain KSM-K16) (Alkalihalobacillus clausii).